Reading from the N-terminus, the 147-residue chain is Large ribosomal subunit protein bL9 (147 aa).

This sequence belongs to the bacterial ribosomal protein bL9 family.

Its function is as follows. Binds to the 23S rRNA. This chain is Large ribosomal subunit protein bL9, found in Clostridium kluyveri (strain NBRC 12016).